The chain runs to 261 residues: tRNA U34 carboxymethyltransferase (261 aa).

Carboxy-S-adenosyl-L-methionine-binding positions include Lys25, Trp39, Lys44, Gly63, 114–115 (VE), Tyr135, and Arg250.

It belongs to the class I-like SAM-binding methyltransferase superfamily. CmoB family. Homotetramer.

The enzyme catalyses carboxy-S-adenosyl-L-methionine + 5-hydroxyuridine(34) in tRNA = 5-carboxymethoxyuridine(34) in tRNA + S-adenosyl-L-homocysteine + H(+). Its function is as follows. Catalyzes carboxymethyl transfer from carboxy-S-adenosyl-L-methionine (Cx-SAM) to 5-hydroxyuridine (ho5U) to form 5-carboxymethoxyuridine (cmo5U) at position 34 in tRNAs. The polypeptide is tRNA U34 carboxymethyltransferase (Helicobacter pylori (strain P12)).